The primary structure comprises 261 residues: Mlc titration factor A (261 aa).

4 residues coordinate Zn(2+): histidine 111, histidine 148, histidine 152, and glutamate 211.

Belongs to the MtfA family. In terms of assembly, interacts with Mlc. Zn(2+) serves as cofactor.

Its subcellular location is the cytoplasm. Involved in the modulation of the activity of the glucose-phosphotransferase system (glucose-PTS). Interacts with the transcriptional repressor Mlc, preventing its interaction with DNA and leading to the modulation of expression of genes regulated by Mlc, including ptsG, which encodes the PTS system glucose-specific EIICB component. Its function is as follows. Shows zinc-dependent metallopeptidase activity. This Edwardsiella ictaluri (strain 93-146) protein is Mlc titration factor A.